The following is a 598-amino-acid chain: Elongation factor 4 (598 aa).

A tr-type G domain is found at 5-187 (ANIRNFSIIA…ALVEFIPAPT (183 aa)). GTP contacts are provided by residues 17–22 (DHGKST) and 134–137 (NKID).

This sequence belongs to the TRAFAC class translation factor GTPase superfamily. Classic translation factor GTPase family. LepA subfamily.

It is found in the cell inner membrane. It carries out the reaction GTP + H2O = GDP + phosphate + H(+). In terms of biological role, required for accurate and efficient protein synthesis under certain stress conditions. May act as a fidelity factor of the translation reaction, by catalyzing a one-codon backward translocation of tRNAs on improperly translocated ribosomes. Back-translocation proceeds from a post-translocation (POST) complex to a pre-translocation (PRE) complex, thus giving elongation factor G a second chance to translocate the tRNAs correctly. Binds to ribosomes in a GTP-dependent manner. The protein is Elongation factor 4 of Psychrobacter cryohalolentis (strain ATCC BAA-1226 / DSM 17306 / VKM B-2378 / K5).